The sequence spans 596 residues: MRKHGWQLPYHPLQVVAVAVFLALGFAFYVFFAPFVGKKIHQYIAMGIYTPLITCVVGLYIWCAASDPADRGVFRSKKYLKIPENGKFPLAKDIKDGCGSATGGAKSHDGTCVEDTENGSNKKLESSERSSLLRLLCSPCALLCSCCSGKDESSEQMSEDGMFYCSLCEVEVFKYSKHCRVCDKCVDRFDHHCRWLNNCIGKRNYRKFFSLMVSAIFLLIMQWSTGIFVLVLCLLRRNQFNADIALKLGSSFSLIPFVIVVGVCTVLAMLATLPLAQLFFFHILLIKKGISTYDYIVALREQEQELEAGGGQQSPQMSMISSFTGLSSASSFNTFHRGAWCTPPRLFLEDQFDVVPPENASVSSYGKKSVVEERVKKKPQPVKISPWTLARLNAEEVSKAAAEARKKSKIIQPVARRENPFVGLEASSSFGSSGRRMFPTKYEGVNNNGKQRRQSKRIRLPAELPLEPLMNVQTKAAMETSTSSGLAPLQLEARSAFQTSRAMSGSGNVMVTSSPESSLDSHDIHPFRVSSEAEDAAQLNGFSSAVGLMGQQRGQQQQQQLSMMMMPLSRSTSDGYDASGGEDSDQVPSRNIHKSR.

2 helical membrane passes run 15 to 35 (VVAV…FAPF) and 44 to 64 (IAMG…IWCA). A disordered region spans residues 102–125 (TGGAKSHDGTCVEDTENGSNKKLE). Residues 163–213 (FYCSLCEVEVFKYSKHCRVCDKCVDRFDHHCRWLNNCIGKRNYRKFFSLMV) form the DHHC domain. C193 (S-palmitoyl cysteine intermediate) is an active-site residue. Transmembrane regions (helical) follow at residues 215-235 (AIFL…LCLL) and 254-274 (LIPF…ATLP). Disordered regions lie at residues 433–455 (SGRR…RRQS), 498–523 (QTSR…DSHD), and 549–596 (MGQQ…HKSR). Over residues 498–518 (QTSRAMSGSGNVMVTSSPESS) the composition is skewed to polar residues. Over residues 549-571 (MGQQRGQQQQQQLSMMMMPLSRS) the composition is skewed to low complexity.

Belongs to the DHHC palmitoyltransferase family.

It is found in the cell membrane. The protein localises to the cytoplasmic vesicle membrane. It catalyses the reaction L-cysteinyl-[protein] + hexadecanoyl-CoA = S-hexadecanoyl-L-cysteinyl-[protein] + CoA. In terms of biological role, palmitoyl acyltransferase. This is Probable protein S-acyltransferase 22 (PAT22) from Arabidopsis thaliana (Mouse-ear cress).